The chain runs to 775 residues: Acetamidase regulatory protein (775 aa).

Over residues methionine 1–glycine 15 the composition is skewed to polar residues. The interval methionine 1–lysine 20 is disordered. Positions cysteine 26–histidine 59 form a DNA-binding region, zn(2)-C6 fungal-type. Over residues proline 126–arginine 153 the composition is skewed to polar residues. Disordered regions lie at residues proline 126–arginine 159 and alanine 630–glutamine 699. Residues alanine 630 to asparagine 644 are compositionally biased toward basic and acidic residues. Pro residues predominate over residues proline 674–proline 689.

The protein resides in the nucleus. Its function is as follows. Positively regulates the expression of genes involved in the catabolism of certain amides, omega amino acids, and lactams. The polypeptide is Acetamidase regulatory protein (amdR) (Aspergillus oryzae (strain ATCC 42149 / RIB 40) (Yellow koji mold)).